We begin with the raw amino-acid sequence, 306 residues long: Pyridoxal 5'-phosphate synthase subunit SNZERR (306 aa).

Asp-34 is a D-ribose 5-phosphate binding site. Catalysis depends on Lys-91, which acts as the Schiff-base intermediate with D-ribose 5-phosphate. Gly-163 provides a ligand contact to D-ribose 5-phosphate. Arg-175 contributes to the D-glyceraldehyde 3-phosphate binding site. Residues Gly-224 and 245 to 246 each bind D-ribose 5-phosphate; that span reads GS.

It belongs to the PdxS/SNZ family.

It catalyses the reaction aldehydo-D-ribose 5-phosphate + D-glyceraldehyde 3-phosphate + L-glutamine = pyridoxal 5'-phosphate + L-glutamate + phosphate + 3 H2O + H(+). Its pathway is cofactor biosynthesis; pyridoxal 5'-phosphate biosynthesis. In terms of biological role, catalyzes the formation of pyridoxal 5'-phosphate from ribose 5-phosphate (RBP), glyceraldehyde 3-phosphate (G3P) and ammonia. The ammonia is provided by PDX2. Can also use ribulose 5-phosphate and dihydroxyacetone phosphate as substrates, resulting from enzyme-catalyzed isomerization of RBP and G3P, respectively. Also plays an indirect role in resistance to singlet oxygen-generating photosensitizers. The chain is Pyridoxal 5'-phosphate synthase subunit SNZERR (SNZERR) from Suberites domuncula (Sponge).